Consider the following 122-residue polypeptide: Large ribosomal subunit protein uL14 (122 aa).

It belongs to the universal ribosomal protein uL14 family. As to quaternary structure, part of the 50S ribosomal subunit. Forms a cluster with proteins L3 and L19. In the 70S ribosome, L14 and L19 interact and together make contacts with the 16S rRNA in bridges B5 and B8. Can interact with ribosomal silencing factor RsfS, which may inhibit ribosomal subunit association.

Its function is as follows. Binds to 23S rRNA. Forms part of two intersubunit bridges in the 70S ribosome. In Synechocystis sp. (strain ATCC 27184 / PCC 6803 / Kazusa), this protein is Large ribosomal subunit protein uL14.